Reading from the N-terminus, the 326-residue chain is Phospholipid scramblase 4 (326 aa).

A disordered region spans residues M1–D32. The segment at M1–M94 is proline-rich domain (PRD). Over M1–K299 the chain is Cytoplasmic. Positions N18–A25 match the SH3-binding 1 motif. Positions P30–Y33 match the PPxY motif motif. An SH3-binding 2 motif is present at residues P41–S49. Phosphotyrosine; by ABL is present on residues Y79 and Y84. The SH3-binding 3 motif lies at M94–V102. 5 S-palmitoyl cysteine lipidation sites follow: C193, C194, C195, C197, and C198. A helical transmembrane segment spans residues M300–F316. At E317–R326 the chain is on the extracellular side.

This sequence belongs to the phospholipid scramblase family. As to quaternary structure, interacts with PDCD6. Interacts with KPNA2; this interaction mediates the nucleus import of PLSCR4. Ca(2+) is required as a cofactor. Requires Mg(2+) as cofactor. Zn(2+) serves as cofactor.

The protein localises to the cell membrane. The protein resides in the nucleus. It catalyses the reaction a 1,2-diacyl-sn-glycero-3-phosphocholine(in) = a 1,2-diacyl-sn-glycero-3-phosphocholine(out). The catalysed reaction is a 1,2-diacyl-sn-glycero-3-phospho-L-serine(in) = a 1,2-diacyl-sn-glycero-3-phospho-L-serine(out). Catalyzes metal ion-induced ATP-independent rapid bidirectional and non-specific movement of phospholipids (lipid scrambling or lipid flip-flop) between the inner and outer leaflet of the plasma membrane and participates in the redistribution of phospholipids between membrane leaflets. Metal ions bind to the calcium-binding site and induce conformation change in the protein. Has a greater affi nity for Ca(2+) than Mg(2+) and Zn(2+). This is Phospholipid scramblase 4 from Mus musculus (Mouse).